A 119-amino-acid polypeptide reads, in one-letter code: Beta-2-microglobulin (119 aa).

A signal peptide spans 1–20 (MARSVVVALLVLLSLSGLEA). In terms of domain architecture, Ig-like C1-type spans 25-114 (PKIQVYSRHP…VTFPTPKTVK (90 aa)). A disulfide bridge connects residues Cys45 and Cys100.

This sequence belongs to the beta-2-microglobulin family. Heterodimer of an alpha chain and a beta chain. Beta-2-microglobulin is the beta-chain of major histocompatibility complex class I molecules.

It localises to the secreted. In terms of biological role, component of the class I major histocompatibility complex (MHC). Involved in the presentation of peptide antigens to the immune system. The polypeptide is Beta-2-microglobulin (B2M) (Lagothrix lagotricha (Brown woolly monkey)).